An 867-amino-acid polypeptide reads, in one-letter code: MAKVLFSSFQQTGISGSLKSGQLSGVFINGTNLKSNAHAKRFRKNSTSSITIRCCASNSPTLENTKLAGAPEKRQKKKQLPYQGILHVPGDRVEELDTRETSLLVAEVKGWLMKLASGKGEISPSAYDTAWVARIASESDSSLPEFPEALEWIINSQLPDGSWGDDRHLQLYDRVLSTLSCLVTLKTWDIGHNSIAQGTKFLRENMIKLKQDDGDLLSGFEVTFPMMLHEAKQLGLDIPYETEFTRLLEISTKKKLAKIPLDKLHSAPTTLLYSLEGLQDLEIDWQKILKLQSKDGSFLSSPSSTACVYLKTKDRKSLQYLQNAMEDQNYAVPCHYPIDLFESLWVVDTIERLGIDVFFRDEIKAVLDYVYSFWTNEGIGWGSTCLVNDIDDTAMAFRILRMHGYNVSPDAFNQFWLPGDKFCCFVGELSHGVSEMLNLHRASQVDFPNEAILTKTFKYSHDYLLNVDSAHMDKWATKKNLMGEVAFELANPFHDCLPRIYNNAYIKHYGMDDLWIAKTIYRLPLVNNKVFLELANRYAQQCQLYQPAELTKLVNWWHSSRFEDIPSTRLTANIDMLPYIYYVICATFHEQEFAQLRVFFSKACCLNTLFDDLMDCATSIEELDRLQNVIERWDISLSHELPLEYRIPFQEFYNTVLVMTEAASKIHKNLSPEFICKYLSGIYTKLIKSEIADARWKIEGYIPSFEEYMENAEVSISTWVHVLMSILFCGEPLTEEILNTIYDSRPLKLDRIICRLCNDIQTYKIEMKLGQPTQGVSCYMKEHPGATEEDALVYLQSLLEKTKRELNESYFITHENDLPKNIKRFNFEMVRMMLITYNETRQVDLFRNPDNELKDMIKFCLETYRTL.

The N-terminal 55 residues, 1–55 (MAKVLFSSFQQTGISGSLKSGQLSGVFINGTNLKSNAHAKRFRKNSTSSITIRCC), are a transit peptide targeting the chloroplast. Substrate is bound at residue lysine 255. Positions 389 and 391 each coordinate Mg(2+). The short motif at 389-392 (DIDD) is the DXDD motif element. Lysine 474 contacts substrate. The Mg(2+) site is built by aspartate 611, aspartate 615, asparagine 758, threonine 762, and glutamate 766. Positions 611 to 615 (DDLMD) match the DDXXD motif motif.

This sequence belongs to the terpene synthase family. Mg(2+) is required as a cofactor.

Its subcellular location is the plastid. The protein localises to the chloroplast. It carries out the reaction (+)-copalyl diphosphate = miltiradiene + diphosphate. It catalyses the reaction (2E,6E,10E)-geranylgeranyl diphosphate = (+)-copalyl diphosphate. It participates in secondary metabolite biosynthesis; terpenoid biosynthesis. Bifunctional diterpene cyclase that catalyzes the successive two-step type-B (protonation-initiated cyclization) and type-A (ionization-initiated cyclization) reactions of geranylgeranyl diphosphate (GGDP) producing successively (+)-copalyl diphosphate and miltiradiene. In Selaginella moellendorffii (Spikemoss), this protein is Bifunctional diterpene synthase, chloroplastic (MDS).